The sequence spans 192 residues: Orotate phosphoribosyltransferase (192 aa).

116-124 (EDIVTTGLS) lines the 5-phospho-alpha-D-ribose 1-diphosphate pocket. Residues Thr-120 and Arg-148 each contribute to the orotate site.

Belongs to the purine/pyrimidine phosphoribosyltransferase family. PyrE subfamily. As to quaternary structure, homodimer. The cofactor is Mg(2+).

The catalysed reaction is orotidine 5'-phosphate + diphosphate = orotate + 5-phospho-alpha-D-ribose 1-diphosphate. It functions in the pathway pyrimidine metabolism; UMP biosynthesis via de novo pathway; UMP from orotate: step 1/2. In terms of biological role, catalyzes the transfer of a ribosyl phosphate group from 5-phosphoribose 1-diphosphate to orotate, leading to the formation of orotidine monophosphate (OMP). This chain is Orotate phosphoribosyltransferase, found in Bartonella bacilliformis (strain ATCC 35685 / KC583 / Herrer 020/F12,63).